We begin with the raw amino-acid sequence, 180 residues long: Alpha-S2-casein-like A (180 aa).

An N-terminal signal peptide occupies residues 1 to 15 (MRFFVFTCLLAVALA). 2 positions are modified to phosphoserine: serine 23 and serine 25. The interval 46–66 (PTNQETPSVSSSEESVEVQTE) is disordered.

This sequence belongs to the alpha-casein family. Mammary gland specific. Secreted in milk.

It is found in the secreted. Important role in the capacity of milk to transport calcium phosphate. The chain is Alpha-S2-casein-like A (CSN1S2A) from Oryctolagus cuniculus (Rabbit).